Reading from the N-terminus, the 335-residue chain is Large ribosomal subunit protein uL10 (335 aa).

A disordered region spans residues 304–335 (GAAAPVEEAPVEEKKEEKKEEAAPAAGLGMLF). Residues 314–325 (VEEKKEEKKEEA) are compositionally biased toward basic and acidic residues.

The protein belongs to the universal ribosomal protein uL10 family. As to quaternary structure, part of the 50S ribosomal subunit. Forms part of the ribosomal stalk which helps the ribosome interact with GTP-bound translation factors. Forms a heptameric L10(L12)2(L12)2(L12)2 complex, where L10 forms an elongated spine to which the L12 dimers bind in a sequential fashion.

In terms of biological role, forms part of the ribosomal stalk, playing a central role in the interaction of the ribosome with GTP-bound translation factors. The sequence is that of Large ribosomal subunit protein uL10 from Methanococcus maripaludis (strain C6 / ATCC BAA-1332).